The sequence spans 281 residues: Small ribosomal subunit protein uS2 (281 aa).

The tract at residues 233-281 (NKAEGEAAEQPMAAWEKELLTNEAPAEASAEAAAPAAAEGETAEAPKAE) is disordered. Residues 255–275 (EAPAEASAEAAAPAAAEGETA) are compositionally biased toward low complexity.

Belongs to the universal ribosomal protein uS2 family.

This Bifidobacterium longum (strain DJO10A) protein is Small ribosomal subunit protein uS2.